A 282-amino-acid polypeptide reads, in one-letter code: Acetyl-coenzyme A carboxylase carboxyl transferase subunit beta (282 aa).

Positions 29 to 282 constitute a CoA carboxyltransferase N-terminal domain; the sequence is LPINCPSCSA…LSSLLGLHQG (254 aa). Residues cysteine 33, cysteine 36, cysteine 52, and cysteine 55 each contribute to the Zn(2+) site. The C4-type zinc-finger motif lies at 33–55; that stretch reads CPSCSARIAAEALQRNLKVCPKC.

It belongs to the AccD/PCCB family. As to quaternary structure, acetyl-CoA carboxylase is a heterohexamer composed of biotin carboxyl carrier protein (AccB), biotin carboxylase (AccC) and two subunits each of ACCase subunit alpha (AccA) and ACCase subunit beta (AccD). Zn(2+) serves as cofactor.

The protein localises to the cytoplasm. It carries out the reaction N(6)-carboxybiotinyl-L-lysyl-[protein] + acetyl-CoA = N(6)-biotinyl-L-lysyl-[protein] + malonyl-CoA. It functions in the pathway lipid metabolism; malonyl-CoA biosynthesis; malonyl-CoA from acetyl-CoA: step 1/1. Its function is as follows. Component of the acetyl coenzyme A carboxylase (ACC) complex. Biotin carboxylase (BC) catalyzes the carboxylation of biotin on its carrier protein (BCCP) and then the CO(2) group is transferred by the transcarboxylase to acetyl-CoA to form malonyl-CoA. The sequence is that of Acetyl-coenzyme A carboxylase carboxyl transferase subunit beta from Syntrophomonas wolfei subsp. wolfei (strain DSM 2245B / Goettingen).